The chain runs to 83 residues: Putative cytochrome b5 B11H24.095 (83 aa).

One can recognise a Cytochrome b5 heme-binding domain in the interval 2–78 (SQTFTKSQVA…GTKLKVGTLA (77 aa)). Histidine 37 and histidine 60 together coordinate heme.

It belongs to the cytochrome b5 family.

In Neurospora crassa (strain ATCC 24698 / 74-OR23-1A / CBS 708.71 / DSM 1257 / FGSC 987), this protein is Putative cytochrome b5 B11H24.095.